We begin with the raw amino-acid sequence, 510 residues long: UDP-N-acetylmuramyl-tripeptide synthetase (510 aa).

Serine 36 provides a ligand contact to UDP-N-acetyl-alpha-D-muramoyl-L-alanyl-D-glutamate. ATP is bound at residue 113-119 (GTKGKTT). Residues 159-160 (TT), serine 186, and arginine 194 contribute to the UDP-N-acetyl-alpha-D-muramoyl-L-alanyl-D-glutamate site. Position 228 is an N6-carboxylysine (lysine 228).

It belongs to the MurCDEF family. MurE subfamily. Post-translationally, carboxylation is probably crucial for Mg(2+) binding and, consequently, for the gamma-phosphate positioning of ATP.

The protein localises to the cytoplasm. It participates in cell wall biogenesis; peptidoglycan biosynthesis. Functionally, catalyzes the addition of an amino acid to the nucleotide precursor UDP-N-acetylmuramoyl-L-alanyl-D-glutamate (UMAG) in the biosynthesis of bacterial cell-wall peptidoglycan. In Ligilactobacillus salivarius (strain UCC118) (Lactobacillus salivarius), this protein is UDP-N-acetylmuramyl-tripeptide synthetase.